The following is a 971-amino-acid chain: Lon protease homolog, mitochondrial (971 aa).

A mitochondrion-targeting transit peptide spans 1 to 55 (MYRAGAVLLRGATRTRLLAAASAHQSFATFSQRNQSILMMKSMELAGNSGERRFY). The region spanning 89 to 359 (VPMLAINRYP…IALLLIQKEK (271 aa)) is the Lon N-terminal domain. The interval 190–255 (TPKNETPLNG…PPSATGEKQK (66 aa)) is disordered. Residues 214–224 (LTPPPSPPPLA) show a composition bias toward pro residues. 512–519 (GPPGVGKT) lines the ATP pocket. The interval 718–749 (AEQQNEDEEPAEKATTAITENSEAEPITSTSS) is disordered. Polar residues predominate over residues 733–749 (TAITENSEAEPITSTSS). The region spanning 784–971 (VTPPGVIMGL…YDELYEHLFQ (188 aa)) is the Lon proteolytic domain. Active-site residues include Ser-878 and Lys-921.

It belongs to the peptidase S16 family. Homohexamer or homoheptamer. Organized in a ring with a central cavity.

The protein localises to the mitochondrion matrix. It carries out the reaction Hydrolysis of proteins in presence of ATP.. Functionally, ATP-dependent serine protease that mediates the selective degradation of misfolded, unassembled or oxidatively damaged polypeptides as well as certain short-lived regulatory proteins in the mitochondrial matrix. May also have a chaperone function in the assembly of inner membrane protein complexes. Participates in the regulation of mitochondrial gene expression and in the maintenance of the integrity of the mitochondrial genome. Binds to mitochondrial DNA in a site-specific manner. Involved in the degradation of transcription factor atfs-1 in the mitochondrion. The chain is Lon protease homolog, mitochondrial from Caenorhabditis elegans.